The primary structure comprises 255 residues: Thrombin-like enzyme batroxobin (255 aa).

An N-terminal signal peptide occupies residues 1 to 18 (MVLIRVIANLLILQVSYA). Positions 19–24 (QKSSEL) are excised as a propeptide. The 223-residue stretch at 25–247 (VIGGDECDIN…YLPWIQSIIA (223 aa)) folds into the Peptidase S1 domain. Disulfide bonds link cysteine 31–cysteine 163, cysteine 50–cysteine 66, cysteine 98–cysteine 254, cysteine 142–cysteine 208, cysteine 174–cysteine 187, and cysteine 198–cysteine 223. Active-site charge relay system residues include histidine 65 and aspartate 110. N-linked (GlcNAc...) asparagine glycosylation is present at asparagine 170. Catalysis depends on serine 202, which acts as the Charge relay system. N-linked (GlcNAc...) asparagine glycosylation occurs at asparagine 249.

Belongs to the peptidase S1 family. Snake venom subfamily. Monomer. Expressed by the venom gland.

It is found in the secreted. It carries out the reaction Selective cleavage of Arg-|-Xaa bond in fibrinogen, to form fibrin, and release fibrinopeptide A. The specificity of further degradation of fibrinogen varies with species origin of the enzyme.. Functionally, thrombin-like snake venom serine protease. Cleaves Arg-Gly bonds in fibrinogen alpha chains (FGA). The sequence is that of Thrombin-like enzyme batroxobin from Bothrops atrox (Barba amarilla).